A 234-amino-acid chain; its full sequence is Orotidine 5'-phosphate decarboxylase (234 aa).

Residues Asp10, Lys32, 59 to 68 (DLKFHDIPNT), Thr119, Arg180, Gln189, Gly209, and Arg210 each bind substrate. The active-site Proton donor is the Lys61.

Belongs to the OMP decarboxylase family. Type 1 subfamily. Homodimer.

It carries out the reaction orotidine 5'-phosphate + H(+) = UMP + CO2. Its pathway is pyrimidine metabolism; UMP biosynthesis via de novo pathway; UMP from orotate: step 2/2. Functionally, catalyzes the decarboxylation of orotidine 5'-monophosphate (OMP) to uridine 5'-monophosphate (UMP). In Mannheimia succiniciproducens (strain KCTC 0769BP / MBEL55E), this protein is Orotidine 5'-phosphate decarboxylase.